Here is a 103-residue protein sequence, read N- to C-terminus: Phosphoribosyl-ATP pyrophosphatase (103 aa).

Belongs to the PRA-PH family.

The protein localises to the cytoplasm. The enzyme catalyses 1-(5-phospho-beta-D-ribosyl)-ATP + H2O = 1-(5-phospho-beta-D-ribosyl)-5'-AMP + diphosphate + H(+). It participates in amino-acid biosynthesis; L-histidine biosynthesis; L-histidine from 5-phospho-alpha-D-ribose 1-diphosphate: step 2/9. This is Phosphoribosyl-ATP pyrophosphatase (hisE) from Rhodobacter capsulatus (strain ATCC BAA-309 / NBRC 16581 / SB1003).